Here is a 342-residue protein sequence, read N- to C-terminus: tRNA N6-adenosine threonylcarbamoyltransferase (342 aa).

Fe cation contacts are provided by histidine 115 and histidine 119. Substrate-binding positions include 137-141, aspartate 170, glycine 183, aspartate 187, and asparagine 276; that span reads IVSGG. Aspartate 304 lines the Fe cation pocket.

The protein belongs to the KAE1 / TsaD family. The cofactor is Fe(2+).

It localises to the cytoplasm. The catalysed reaction is L-threonylcarbamoyladenylate + adenosine(37) in tRNA = N(6)-L-threonylcarbamoyladenosine(37) in tRNA + AMP + H(+). Its function is as follows. Required for the formation of a threonylcarbamoyl group on adenosine at position 37 (t(6)A37) in tRNAs that read codons beginning with adenine. Is involved in the transfer of the threonylcarbamoyl moiety of threonylcarbamoyl-AMP (TC-AMP) to the N6 group of A37, together with TsaE and TsaB. TsaD likely plays a direct catalytic role in this reaction. The sequence is that of tRNA N6-adenosine threonylcarbamoyltransferase from Staphylococcus haemolyticus (strain JCSC1435).